An 872-amino-acid chain; its full sequence is Probable GPI-anchored adhesin-like protein PGA25 (872 aa).

A signal peptide spans 1 to 19 (MKVTAVSSVLLTVAALTNA). A compositionally biased stretch (low complexity) spans 43–65 (PAAAPAAQPAAQPTTQSPADQPT). 3 disordered regions span residues 43 to 383 (PAAA…TIIP), 492 to 517 (KPTG…DETD), and 623 to 809 (PDDW…ECDT). The span at 66 to 83 (VQSPVSSDQPSTAQPVAQ) shows a compositional bias: polar residues. Low complexity-rich tracts occupy residues 84–110 (NNLL…TRST) and 125–171 (SSEA…SSSS). Asn92 is a glycosylation site (N-linked (GlcNAc...) asparagine). Acidic residues predominate over residues 196–207 (ETDDEDCVEETE). Low complexity-rich tracts occupy residues 208 to 225 (SPTS…VATT), 242 to 260 (SSAP…SSTT), and 274 to 293 (SSVP…NTTT). Asn290 is a glycosylation site (N-linked (GlcNAc...) asparagine). A compositionally biased stretch (acidic residues) spans 317-328 (AEEDDEECEDPT). Low complexity predominate over residues 349–363 (TSQSKTSVSSVVSKS). Positions 366 to 376 (EDDDDETECET) are enriched in acidic residues. The span at 495 to 506 (GSGSITVLPTKS) shows a compositional bias: polar residues. Acidic residues-rich tracts occupy residues 624-635 (DDWEDDGYEGED) and 646-659 (DDGE…DDGE). 3 stretches are compositionally biased toward gly residues: residues 666-692 (SSSG…GSGS), 701-710 (SSGGTWGGSG), and 731-740 (SWWGGSGSGS). Residues 741–760 (SSGSSSGVSSGDSGSSSVTG) are compositionally biased toward low complexity. A compositionally biased stretch (gly residues) spans 761-771 (GSSGSWWGGSG). Residues 780-808 (DGYDDEDDQTPEPECDDEDDSWDDDEECD) are compositionally biased toward acidic residues. The GPI-anchor amidated alanine moiety is linked to residue Ala845. The propeptide at 846–872 (QSVTQIENIGGKVSASGLFVVLGLLLI) is removed in mature form.

This sequence belongs to the HYR1/IFF family. Post-translationally, the GPI-anchor is attached to the protein in the endoplasmic reticulum and serves to target the protein to the cell surface. There, the glucosamine-inositol phospholipid moiety is cleaved off and the GPI-modified mannoprotein is covalently attached via its lipidless GPI glycan remnant to the 1,6-beta-glucan of the outer cell wall layer.

Its subcellular location is the secreted. It localises to the cell wall. It is found in the membrane. Probable GPI-anchored cell wall protein involved in cell wall organization, hyphal growth, as well as in host-fungal interaction and virulence. This is Probable GPI-anchored adhesin-like protein PGA25 (PGA25) from Candida albicans (strain SC5314 / ATCC MYA-2876) (Yeast).